Consider the following 301-residue polypeptide: TLR adapter interacting with SLC15A4 on the lysosome (301 aa).

Positions 290 to 294 match the pLxIS motif motif; sequence SLHIS. Ser-294 carries the phosphoserine modification.

As to quaternary structure, interacts (via pLxIS motif) with IRF5; leading to IRF5 activation. Interacts with SLC15A4; leading to its recruitment to endolysosome. In terms of processing, the phosphorylated pLxIS motif constitutes an IRF5-binding motif, leading to recruitment of the transcription factor IRF5 to induce type-I interferons and other cytokines. In terms of tissue distribution, highly expressed in immune cell types such as B-cells, neutrophils, dendritic cells and monocytes, the expression levels are two-three-fold higher in female cells compared to male cells (at protein level). Expressed at low levels in T-cells and NK cells.

Its subcellular location is the lysosome membrane. It localises to the endosome membrane. The protein resides in the nucleus. The protein localises to the cytoplasm. Functionally, innate immune adapter that mediates the recruitment and activation of IRF5 downstream of endolysosomal toll-like receptors TLR7, TLR8 and TLR9. Following recruitment to endolysosome by SLC15A4 downstream of TLR7, TLR8 and TLR9, specifically recruits IRF5 transcription factor via its pLxIS motif, leading to IRF5 activation and subsequent expression of type I interferons. Plays a role in the regulation of endolysosomal pH in immune cells such as B-cells, dendritic cells and monocytes. This Homo sapiens (Human) protein is TLR adapter interacting with SLC15A4 on the lysosome.